The following is a 92-amino-acid chain: Small ribosomal subunit protein uS19 (92 aa).

The protein belongs to the universal ribosomal protein uS19 family.

Its function is as follows. Protein S19 forms a complex with S13 that binds strongly to the 16S ribosomal RNA. The protein is Small ribosomal subunit protein uS19 of Pectobacterium atrosepticum (strain SCRI 1043 / ATCC BAA-672) (Erwinia carotovora subsp. atroseptica).